Here is a 322-residue protein sequence, read N- to C-terminus: Transaldolase (322 aa).

Lysine 136 functions as the Schiff-base intermediate with substrate in the catalytic mechanism.

This sequence belongs to the transaldolase family. Type 1 subfamily. In terms of assembly, homodimer.

It localises to the cytoplasm. It carries out the reaction D-sedoheptulose 7-phosphate + D-glyceraldehyde 3-phosphate = D-erythrose 4-phosphate + beta-D-fructose 6-phosphate. The protein operates within carbohydrate degradation; pentose phosphate pathway; D-glyceraldehyde 3-phosphate and beta-D-fructose 6-phosphate from D-ribose 5-phosphate and D-xylulose 5-phosphate (non-oxidative stage): step 2/3. Functionally, transaldolase is important for the balance of metabolites in the pentose-phosphate pathway. This chain is Transaldolase, found in Xanthomonas oryzae pv. oryzae (strain PXO99A).